Reading from the N-terminus, the 218-residue chain is Phosphoglycolate phosphatase (218 aa).

Catalysis depends on Asp7, which acts as the Nucleophile. Mg(2+) contacts are provided by Asp7, Asp9, and Asp167.

It belongs to the HAD-like hydrolase superfamily. CbbY/CbbZ/Gph/YieH family. The cofactor is Mg(2+).

The enzyme catalyses 2-phosphoglycolate + H2O = glycolate + phosphate. The protein operates within organic acid metabolism; glycolate biosynthesis; glycolate from 2-phosphoglycolate: step 1/1. Specifically catalyzes the dephosphorylation of 2-phosphoglycolate. Is involved in the dissimilation of the intracellular 2-phosphoglycolate formed during the DNA repair of 3'-phosphoglycolate ends, a major class of DNA lesions induced by oxidative stress. The polypeptide is Phosphoglycolate phosphatase (Cereibacter sphaeroides (strain ATCC 17025 / ATH 2.4.3) (Rhodobacter sphaeroides)).